Consider the following 338-residue polypeptide: MVKVGINGFGRIGRIVLRNALQFQDIEVVAVNDPFIDLEYMAYMFKYDSVHGRFKGTVEVKNGSFVVDGRPMKVFAERDPAAIPWGSVGADYVVESTGVFTTIDKASAHLKGGAKKVVISAPSADAPMYVCGVNLDKYNPKDTIISNASCTTNCLATLAKVIHDNFGIVEGLMTTVHATTATQKTVDGPSHKDWRGGRGVGNNIIPSSTGAAKAVGKVIPSLNGKLTGLSMRVPTQDVSVVDLVVRLEKPASYEQIKEVMRKAAEGEYKGIIAYTDEDVVSTDFISDNNSCVFDAKAGIQLSPNFVKLIAWYDNEWGYSRRVCNLLQYVAKEDAKAGI.

Residues 11–12 (RI), D33, and R78 each bind NAD(+). Residues 149 to 151 (SCT), T180, 209 to 210 (TG), and R232 contribute to the D-glyceraldehyde 3-phosphate site. The active-site Nucleophile is the C150. An NAD(+)-binding site is contributed by N314.

It belongs to the glyceraldehyde-3-phosphate dehydrogenase family. Homotetramer.

It is found in the cytoplasm. The enzyme catalyses D-glyceraldehyde 3-phosphate + phosphate + NAD(+) = (2R)-3-phospho-glyceroyl phosphate + NADH + H(+). It participates in carbohydrate degradation; glycolysis; pyruvate from D-glyceraldehyde 3-phosphate: step 1/5. This chain is Glyceraldehyde-3-phosphate dehydrogenase 2 (gpd2), found in Agaricus bisporus (White button mushroom).